We begin with the raw amino-acid sequence, 517 residues long: Ribonuclease Y (517 aa).

Residues Met1–Tyr21 form a helical membrane-spanning segment. A KH domain is found at Leu207–Asp273. Residues Ala333–Ala426 form the HD domain.

Belongs to the RNase Y family.

The protein localises to the cell membrane. Endoribonuclease that initiates mRNA decay. The chain is Ribonuclease Y from Campylobacter concisus (strain 13826).